We begin with the raw amino-acid sequence, 316 residues long: Pantothenate kinase (316 aa).

ATP is bound at residue 95-102 (GSVAVGKS).

The protein belongs to the prokaryotic pantothenate kinase family.

It localises to the cytoplasm. It catalyses the reaction (R)-pantothenate + ATP = (R)-4'-phosphopantothenate + ADP + H(+). The protein operates within cofactor biosynthesis; coenzyme A biosynthesis; CoA from (R)-pantothenate: step 1/5. This is Pantothenate kinase from Salmonella gallinarum (strain 287/91 / NCTC 13346).